The following is a 119-amino-acid chain: Tubulin-specific chaperone A (119 aa).

This sequence belongs to the TBCA family. In terms of assembly, supercomplex made of cofactors A to E. Cofactors A and D function by capturing and stabilizing tubulin in a quasi-native conformation. Cofactor E binds to the cofactor D-tubulin complex; interaction with cofactor C then causes the release of tubulin polypeptides that are committed to the native state.

The protein localises to the cytoplasm. It is found in the cytoskeleton. Required for the maintenance of microtubule structures and cell polarity. Beta-tubulin-folding protein; may have a regulatory role in the tubulin-folding pathway. The protein is Tubulin-specific chaperone A (alp31) of Schizosaccharomyces pombe (strain 972 / ATCC 24843) (Fission yeast).